Consider the following 82-residue polypeptide: Acyl carrier protein (82 aa).

The Carrier domain occupies 2-77 (DNVADRVKKV…QAIDYVSAHI (76 aa)). Ser37 carries the O-(pantetheine 4'-phosphoryl)serine modification.

The protein belongs to the acyl carrier protein (ACP) family. 4'-phosphopantetheine is transferred from CoA to a specific serine of apo-ACP by AcpS. This modification is essential for activity because fatty acids are bound in thioester linkage to the sulfhydryl of the prosthetic group.

The protein localises to the cytoplasm. The protein operates within lipid metabolism; fatty acid biosynthesis. Its function is as follows. Carrier of the growing fatty acid chain in fatty acid biosynthesis. This is Acyl carrier protein from Acidithiobacillus ferrooxidans (strain ATCC 23270 / DSM 14882 / CIP 104768 / NCIMB 8455) (Ferrobacillus ferrooxidans (strain ATCC 23270)).